Here is a 211-residue protein sequence, read N- to C-terminus: 7-carboxy-7-deazaguanine synthase (211 aa).

Residues 22-24 (LQG) and Arg-37 contribute to the substrate site. The Radical SAM core domain maps to 28–211 (NTGMPSVFVR…LQTHKLIGIE (184 aa)). [4Fe-4S] cluster-binding residues include Cys-41, Cys-45, and Cys-48. Thr-50 contacts Mg(2+). Thr-78 lines the substrate pocket. S-adenosyl-L-methionine contacts are provided by residues Gly-80 and 122 to 124 (SPK).

Belongs to the radical SAM superfamily. 7-carboxy-7-deazaguanine synthase family. In terms of assembly, homodimer. [4Fe-4S] cluster is required as a cofactor. It depends on S-adenosyl-L-methionine as a cofactor. Mg(2+) serves as cofactor.

The catalysed reaction is 6-carboxy-5,6,7,8-tetrahydropterin + H(+) = 7-carboxy-7-deazaguanine + NH4(+). Its pathway is purine metabolism; 7-cyano-7-deazaguanine biosynthesis. Catalyzes the complex heterocyclic radical-mediated conversion of 6-carboxy-5,6,7,8-tetrahydropterin (CPH4) to 7-carboxy-7-deazaguanine (CDG), a step common to the biosynthetic pathways of all 7-deazapurine-containing compounds. The chain is 7-carboxy-7-deazaguanine synthase from Haemophilus influenzae (strain ATCC 51907 / DSM 11121 / KW20 / Rd).